We begin with the raw amino-acid sequence, 163 residues long: MRKIALFPGSFDPMTNGHLNLIERSAKLFDEVIIGVFINTSKQTLFTPEEKKYLIEEATKEMPNVRVIMQETQLTVESAKSLGANFLIRGIRNVKDYEYEKDIAKMNQHLAPEIETVFLLAEEPYAHVSSSLLKEVLRFGGDVSDYLPPNIYHALKQKKNDWS.

Residues serine 10 and histidine 18 each contribute to the ATP site. Serine 10 provides a ligand contact to substrate. Substrate contacts are provided by lysine 42, threonine 75, and arginine 89. ATP contacts are provided by residues glycine 90–arginine 92, glutamate 100, and tyrosine 125–serine 131.

Belongs to the bacterial CoaD family. Homohexamer. Requires Mg(2+) as cofactor.

The protein resides in the cytoplasm. The enzyme catalyses (R)-4'-phosphopantetheine + ATP + H(+) = 3'-dephospho-CoA + diphosphate. It functions in the pathway cofactor biosynthesis; coenzyme A biosynthesis; CoA from (R)-pantothenate: step 4/5. Functionally, reversibly transfers an adenylyl group from ATP to 4'-phosphopantetheine, yielding dephospho-CoA (dPCoA) and pyrophosphate. The polypeptide is Phosphopantetheine adenylyltransferase (Enterococcus faecalis (strain ATCC 700802 / V583)).